We begin with the raw amino-acid sequence, 165 residues long: Transcriptional repressor NrdR (165 aa).

Residues Cys3–Cys34 fold into a zinc finger. The ATP-cone domain occupies Leu46 to Asp136.

Belongs to the NrdR family. It depends on Zn(2+) as a cofactor.

Negatively regulates transcription of bacterial ribonucleotide reductase nrd genes and operons by binding to NrdR-boxes. The protein is Transcriptional repressor NrdR of Arthrobacter sp. (strain FB24).